Here is a 788-residue protein sequence, read N- to C-terminus: Multifunctional tryptophan biosynthesis protein (788 aa).

In terms of domain architecture, Glutamine amidotransferase type-1 spans 12–207; sequence DILMIDNFDS…MKLKGGTWEE (196 aa). Position 63-65 (63-65) interacts with L-glutamine; that stretch reads GPG. The active-site Nucleophile; for GATase activity is the C91. 141 to 142 is a binding site for L-glutamine; sequence SL. Catalysis depends on for GATase activity residues H181 and E183. The indole-3-glycerol phosphate synthase stretch occupies residues 238 to 503; the sequence is ILEKICAQRQ…DTRAFIRQLL (266 aa). An N-(5'-phosphoribosyl)anthranilate isomerase region spans residues 520-788; it reads LSRSCGIRTE…RAFVKAAKKL (269 aa).

The enzyme catalyses N-(5-phospho-beta-D-ribosyl)anthranilate = 1-(2-carboxyphenylamino)-1-deoxy-D-ribulose 5-phosphate. It catalyses the reaction 1-(2-carboxyphenylamino)-1-deoxy-D-ribulose 5-phosphate + H(+) = (1S,2R)-1-C-(indol-3-yl)glycerol 3-phosphate + CO2 + H2O. It carries out the reaction chorismate + L-glutamine = anthranilate + pyruvate + L-glutamate + H(+). The protein operates within amino-acid biosynthesis; L-tryptophan biosynthesis; L-tryptophan from chorismate: step 1/5. It functions in the pathway amino-acid biosynthesis; L-tryptophan biosynthesis; L-tryptophan from chorismate: step 3/5. Its pathway is amino-acid biosynthesis; L-tryptophan biosynthesis; L-tryptophan from chorismate: step 4/5. Its function is as follows. Trifunctional enzyme bearing the Gln amidotransferase (GATase) domain of anthranilate synthase, indole-glycerolphosphate synthase, and phosphoribosylanthranilate isomerase activities. This is Multifunctional tryptophan biosynthesis protein (TRPC) from Phanerodontia chrysosporium (White-rot fungus).